Here is a 191-residue protein sequence, read N- to C-terminus: UPF0398 protein LCABL_17010 (191 aa).

The protein belongs to the UPF0398 family.

The sequence is that of UPF0398 protein LCABL_17010 from Lacticaseibacillus casei (strain BL23) (Lactobacillus casei).